An 836-amino-acid polypeptide reads, in one-letter code: Eukaryotic translation initiation factor 3 subunit C (836 aa).

The interval 1-97 is disordered; that stretch reads MSRFFVSGYD…RRVVKSAKEK (97 aa). Positions 13-55 are enriched in acidic residues; that stretch reads SSSEEEDLLTSSEEELMSSEQESDSEFDDEFANDDDSDSSDSD. Basic and acidic residues predominate over residues 86-97; sequence EGRRVVKSAKEK. One can recognise a PCI domain in the interval 586-761; the sequence is FHMHINLELL…KSINFVSSEH (176 aa). Residues 783 to 817 form a disordered region; the sequence is DKNEKTASNGHGRKTTQQQQQQQQKEQREQTHDEN. A compositionally biased stretch (low complexity) spans 797–806; it reads TTQQQQQQQQ. Positions 807-817 are enriched in basic and acidic residues; sequence KEQREQTHDEN.

The protein belongs to the eIF-3 subunit C family. As to quaternary structure, component of the eukaryotic translation initiation factor 3 (eIF-3) complex.

The protein resides in the cytoplasm. Its function is as follows. Component of the eukaryotic translation initiation factor 3 (eIF-3) complex, which is involved in protein synthesis of a specialized repertoire of mRNAs and, together with other initiation factors, stimulates binding of mRNA and methionyl-tRNAi to the 40S ribosome. The eIF-3 complex specifically targets and initiates translation of a subset of mRNAs involved in cell proliferation. This is Eukaryotic translation initiation factor 3 subunit C from Meyerozyma guilliermondii (strain ATCC 6260 / CBS 566 / DSM 6381 / JCM 1539 / NBRC 10279 / NRRL Y-324) (Yeast).